The chain runs to 137 residues: Large ribosomal subunit protein uL16c (137 aa).

Belongs to the universal ribosomal protein uL16 family. As to quaternary structure, part of the 50S ribosomal subunit.

It localises to the plastid. The polypeptide is Large ribosomal subunit protein uL16c (Cuscuta reflexa (Southern Asian dodder)).